The primary structure comprises 122 residues: Small ribosomal subunit protein uS13 (122 aa).

The interval 99–122 is disordered; it reads RGQRTHTNARTRKGPAKAIAGKKK.

This sequence belongs to the universal ribosomal protein uS13 family. As to quaternary structure, part of the 30S ribosomal subunit. Forms a loose heterodimer with protein S19. Forms two bridges to the 50S subunit in the 70S ribosome.

Functionally, located at the top of the head of the 30S subunit, it contacts several helices of the 16S rRNA. In the 70S ribosome it contacts the 23S rRNA (bridge B1a) and protein L5 of the 50S subunit (bridge B1b), connecting the 2 subunits; these bridges are implicated in subunit movement. Contacts the tRNAs in the A and P-sites. This Cereibacter sphaeroides (strain ATCC 17025 / ATH 2.4.3) (Rhodobacter sphaeroides) protein is Small ribosomal subunit protein uS13.